The following is a 449-amino-acid chain: Protein phosphatase fem-2 (449 aa).

Residues 28–34 (EEAFADE) are interaction with fem-1 and fem-3. Residues 54-56 (IRF) are interaction with fem-3. In terms of domain architecture, PPM-type phosphatase spans 160 to 424 (GIHVSGDQLK…DNVSVVIGFL (265 aa)). Mg(2+) contacts are provided by Asp-202, Gly-203, Asp-370, and Asp-415.

It belongs to the PP2C family. In terms of assembly, component of a complex containing fem-1, fem-2 and fem-3. Interacts (via N-terminus) with fem-1 and fem-3. Component of the CBC(fem-1) E3 ubiquitin-protein ligase complex, at least composed of cul-2, elc-1, tra-1, fem-1, fem-2 and fem-3; mediates the ubiquitination and subsequent proteasomal degradation of tra-1. Interacts with tra-1. Interacts with sel-10. Mg(2+) is required as a cofactor. Requires Mn(2+) as cofactor.

The enzyme catalyses O-phospho-L-seryl-[protein] + H2O = L-seryl-[protein] + phosphate. It catalyses the reaction O-phospho-L-threonyl-[protein] + H2O = L-threonyl-[protein] + phosphate. Functionally, dephosphorylates auto-phosphorylated Ca(2+)/calmodulin-dependent protein kinase unc-43/CAMKII in vitro. Involved in the regulation of sex determination. Together with fem-3, required for male sexual development by promoting the proteasomal-mediated degradation of tra-1, a transcription repressor of male-specific genes. Promotes apoptosis. The sequence is that of Protein phosphatase fem-2 from Caenorhabditis elegans.